Consider the following 219-residue polypeptide: Ribosomal RNA small subunit methyltransferase I (219 aa).

This sequence belongs to the methyltransferase superfamily. RsmI family.

It localises to the cytoplasm. It catalyses the reaction cytidine(1402) in 16S rRNA + S-adenosyl-L-methionine = 2'-O-methylcytidine(1402) in 16S rRNA + S-adenosyl-L-homocysteine + H(+). In terms of biological role, catalyzes the 2'-O-methylation of the ribose of cytidine 1402 (C1402) in 16S rRNA. The polypeptide is Ribosomal RNA small subunit methyltransferase I (Coprothermobacter proteolyticus (strain ATCC 35245 / DSM 5265 / OCM 4 / BT)).